The following is a 669-amino-acid chain: RNA-binding protein 14 (669 aa).

2 RRM domains span residues 1–73 (MKIF…MSRP) and 79–149 (WKIF…LSTK). Glycyl lysine isopeptide (Lys-Gly) (interchain with G-Cter in SUMO2) cross-links involve residues lysine 126, lysine 135, lysine 138, lysine 149, and lysine 153. 2 disordered regions span residues 147–175 (STKGQKKGPGLAVQSGDKTKKPGAGDTAF) and 193–232 (NSTGGFDGQARQPTPPFFGRDRSPLRRSPPRASYVAPLTA). The residue at position 161 (serine 161) is a Phosphoserine. Residue lysine 164 is modified to N6-acetyllysine; alternate. Residue lysine 164 forms a Glycyl lysine isopeptide (Lys-Gly) (interchain with G-Cter in SUMO2); alternate linkage. Threonine 206 is subject to Phosphothreonine. 6 positions are modified to phosphoserine: serine 220, serine 242, serine 244, serine 256, serine 272, and serine 280. The disordered stretch occupies residues 284–303 (PYRGQLASPSSQSAAASSLG). Low complexity predominate over residues 287-303 (GQLASPSSQSAAASSLG). A TRBP-interacting domain; interaction with STIL region spans residues 307-354 (GAQPSASALSSYGGQAAAASSLNSYGAQGSSLASYGNQPSSYGAQAAS). Residues serine 520, serine 523, serine 527, and serine 562 each carry the phosphoserine modification. The tract at residues 566-590 (VANANSTPPPYERTRLSPPRASYDD) is disordered. Threonine 572 is modified (phosphothreonine). Serine 582 is subject to Phosphoserine. Lysine 600 participates in a covalent cross-link: Glycyl lysine isopeptide (Lys-Gly) (interchain with G-Cter in SUMO2). Phosphoserine occurs at positions 618, 620, 623, 627, 643, and 649.

Isoform 1: Interacts with NCOA6, CITED1 and XRCC5/KU86. Isoform 1: Interacts with SS18 isoform 1. Isoform 1: Interacts with SS18 isoform 2. Interacts with STIL and interferes with its interaction with CPAP. Interacts with gamma-tubulin. Part of the HDP-RNP complex composed of at least HEXIM1, PRKDC, XRCC5, XRCC6, paraspeckle proteins (SFPQ, NONO, PSPC1, RBM14, and MATR3) and NEAT1 RNA. Interacts with RBPMS; the interaction allows cooperative assembly of RNA-bound stable cell-specific alternative splicing regulatory complexes. Expressed in all tissues tested, including brain, heart, skeletal muscle, colon, thymus, spleen, kidney, liver, small intestine, placenta, lung and peripheral blood lymphocytes.

It localises to the nucleus. It is found in the nucleolus. The protein resides in the cytoplasm. In terms of biological role, isoform 1 may function as a nuclear receptor coactivator, enhancing transcription through other coactivators such as NCOA6 and CITED1. Isoform 2, functions as a transcriptional repressor, modulating transcriptional activities of coactivators including isoform 1, NCOA6 and CITED1. Regulates centriole biogenesis by suppressing the formation of aberrant centriolar protein complexes in the cytoplasm and thus preserving mitotic spindle integrity. Prevents the formation of the STIL-CPAP complex (which can induce the formation of aberrant centriolar protein complexes) by interfering with the interaction of STIL with CPAP. Plays a role in the regulation of DNA virus-mediated innate immune response by assembling into the HDP-RNP complex, a complex that serves as a platform for IRF3 phosphorylation and subsequent innate immune response activation through the cGAS-STING pathway. Also involved in the regulation of pre-mRNA alternative splicing. The polypeptide is RNA-binding protein 14 (RBM14) (Homo sapiens (Human)).